The primary structure comprises 320 residues: Transcription factor MYB80 (320 aa).

HTH myb-type domains are found at residues 9–65 (KENV…RPDL) and 66–116 (KHGQ…KKKL). 2 DNA-binding regions (H-T-H motif) span residues 37 to 61 (WRLIPKNAGLQRCGKSCRLRWTNYL) and 89 to 112 (WSLIAAQLPGRTDNDVKNYWNTKL). The disordered stretch occupies residues 257–283 (TAAAEEEERRKLKGEVVDQEEIGSEGG). The span at 263–272 (EERRKLKGEV) shows a compositional bias: basic and acidic residues.

Expressed in the tapetum and middle layer of developing anthers. Expressed in trichomes.

It localises to the nucleus. Transcription factor that binds to the DNA sequence 5'-CCAACC-3'. Regulates directly PME5, UND and GLOX1. Essential for tapetum development in anthers and microsporogenesis. Regulates the timing of tapetal programmed cell death (PCD) which is critical for pollen development. May act through the activation of UND, encoding an A1 aspartic protease. Required for anther development by regulating tapetum development, callose dissolution and exine formation. Acts upstream of A6 and FAR2/MS2, two genes required for pollen exine formation. Negatively regulates trichome endoreduplication and trichome branching. The protein is Transcription factor MYB80 of Arabidopsis thaliana (Mouse-ear cress).